The sequence spans 308 residues: Aspartate carbamoyltransferase catalytic subunit (308 aa).

Carbamoyl phosphate contacts are provided by R59 and T60. An L-aspartate-binding site is contributed by K87. R109, H137, and Q140 together coordinate carbamoyl phosphate. R170 and R224 together coordinate L-aspartate. Carbamoyl phosphate is bound by residues G265 and P266.

Belongs to the aspartate/ornithine carbamoyltransferase superfamily. ATCase family. In terms of assembly, heterododecamer (2C3:3R2) of six catalytic PyrB chains organized as two trimers (C3), and six regulatory PyrI chains organized as three dimers (R2).

The enzyme catalyses carbamoyl phosphate + L-aspartate = N-carbamoyl-L-aspartate + phosphate + H(+). It participates in pyrimidine metabolism; UMP biosynthesis via de novo pathway; (S)-dihydroorotate from bicarbonate: step 2/3. In terms of biological role, catalyzes the condensation of carbamoyl phosphate and aspartate to form carbamoyl aspartate and inorganic phosphate, the committed step in the de novo pyrimidine nucleotide biosynthesis pathway. The sequence is that of Aspartate carbamoyltransferase catalytic subunit from Flavobacterium johnsoniae (strain ATCC 17061 / DSM 2064 / JCM 8514 / BCRC 14874 / CCUG 350202 / NBRC 14942 / NCIMB 11054 / UW101) (Cytophaga johnsonae).